Consider the following 379-residue polypeptide: Protein COS2 (379 aa).

Topologically, residues 1 to 72 (MKENELKNEK…WKLSNNCIYP (72 aa)) are cytoplasmic. Residues 73 to 93 (LIVSLLVLFLGPIFVLVICGL) traverse the membrane as a helical segment. The Extracellular segment spans residues 94 to 254 (SRKRSLSKQL…FLCCIYVSRG (161 aa)). Residues 255 to 275 (MCLLLRTLYLGWILFMLVQGF) traverse the membrane as a helical segment. The Cytoplasmic segment spans residues 276 to 379 (QNIRVLIMSM…QLSRSEVLLV (104 aa)).

The protein belongs to the DUP/COS family.

The protein localises to the membrane. This chain is Protein COS2 (COS2), found in Saccharomyces cerevisiae (strain ATCC 204508 / S288c) (Baker's yeast).